Reading from the N-terminus, the 238-residue chain is MKSLFLSEKIYVLILAGGTGSRMGSKIPKQFLELNGEPILIHSLKRFQNWGKQKRIVLVSHFESIPKIESICASYLENEDRIVQGGENRHSSMLCGLSVLDFKDEDIILVHDAARPFVLADELDSLCEKVRSDGIATLASRTSETVLEELNGKTVSFLDREHVWFMKTPQGIRGDVLKELLTFSVDSIPTDLCSWALTFGKTSSIVESNPLNLKITRKEDLDLAEVFSSLFQKISSDI.

The protein belongs to the IspD/TarI cytidylyltransferase family. IspD subfamily.

It catalyses the reaction 2-C-methyl-D-erythritol 4-phosphate + CTP + H(+) = 4-CDP-2-C-methyl-D-erythritol + diphosphate. Its pathway is isoprenoid biosynthesis; isopentenyl diphosphate biosynthesis via DXP pathway; isopentenyl diphosphate from 1-deoxy-D-xylulose 5-phosphate: step 2/6. Functionally, catalyzes the formation of 4-diphosphocytidyl-2-C-methyl-D-erythritol from CTP and 2-C-methyl-D-erythritol 4-phosphate (MEP). The sequence is that of 2-C-methyl-D-erythritol 4-phosphate cytidylyltransferase from Leptospira interrogans serogroup Icterohaemorrhagiae serovar copenhageni (strain Fiocruz L1-130).